Here is a 592-residue protein sequence, read N- to C-terminus: NADH-quinone oxidoreductase subunit C/D (592 aa).

An NADH dehydrogenase I subunit C region spans residues 1-183 (MSAAQSPTAQ…DPYTLTVEGQ (183 aa)). An NADH dehydrogenase I subunit D region spans residues 207–592 (DYMFLNLGPN…IDFVMADVDR (386 aa)).

This sequence in the N-terminal section; belongs to the complex I 30 kDa subunit family. It in the C-terminal section; belongs to the complex I 49 kDa subunit family. In terms of assembly, NDH-1 is composed of 13 different subunits. Subunits NuoB, CD, E, F, and G constitute the peripheral sector of the complex.

The protein localises to the cell inner membrane. The catalysed reaction is a quinone + NADH + 5 H(+)(in) = a quinol + NAD(+) + 4 H(+)(out). Functionally, NDH-1 shuttles electrons from NADH, via FMN and iron-sulfur (Fe-S) centers, to quinones in the respiratory chain. The immediate electron acceptor for the enzyme in this species is believed to be ubiquinone. Couples the redox reaction to proton translocation (for every two electrons transferred, four hydrogen ions are translocated across the cytoplasmic membrane), and thus conserves the redox energy in a proton gradient. The protein is NADH-quinone oxidoreductase subunit C/D of Chromohalobacter salexigens (strain ATCC BAA-138 / DSM 3043 / CIP 106854 / NCIMB 13768 / 1H11).